We begin with the raw amino-acid sequence, 117 residues long: MVVKLVVAVRKDLDMGKGKIAAQVAHAAVSCAIKAMKEKKKIFDEWMDEGQKKIVVKVPNVDEIYIIKKKADSMGIINEVIQDRGYTQVEPGTVTCIGLGPDYEVYLDDITGKYKLL.

This sequence belongs to the PTH2 family.

The protein localises to the cytoplasm. It catalyses the reaction an N-acyl-L-alpha-aminoacyl-tRNA + H2O = an N-acyl-L-amino acid + a tRNA + H(+). Its function is as follows. The natural substrate for this enzyme may be peptidyl-tRNAs which drop off the ribosome during protein synthesis. The chain is Peptidyl-tRNA hydrolase from Thermoplasma volcanium (strain ATCC 51530 / DSM 4299 / JCM 9571 / NBRC 15438 / GSS1).